We begin with the raw amino-acid sequence, 230 residues long: UPF0702 transmembrane protein YcaP (230 aa).

3 helical membrane-spanning segments follow: residues 16–36, 48–68, and 75–95; these read FDFL…VFLF, MSLF…DVAF, and VPVL…MWLM.

The protein belongs to the UPF0702 family.

The protein localises to the cell membrane. In Escherichia coli (strain K12), this protein is UPF0702 transmembrane protein YcaP (ycaP).